The following is a 379-amino-acid chain: Homoserine O-succinyltransferase (379 aa).

The 310-residue stretch at 51 to 360 (NAVLICHALS…DSPYGHDAFL (310 aa)) folds into the AB hydrolase-1 domain. Serine 157 serves as the catalytic Nucleophile. Arginine 227 lines the substrate pocket. Catalysis depends on residues aspartate 323 and histidine 356. Aspartate 357 contacts substrate.

It belongs to the AB hydrolase superfamily. MetX family. Homodimer.

Its subcellular location is the cytoplasm. It carries out the reaction L-homoserine + succinyl-CoA = O-succinyl-L-homoserine + CoA. It functions in the pathway amino-acid biosynthesis; L-methionine biosynthesis via de novo pathway; O-succinyl-L-homoserine from L-homoserine: step 1/1. In terms of biological role, transfers a succinyl group from succinyl-CoA to L-homoserine, forming succinyl-L-homoserine. This is Homoserine O-succinyltransferase from Pseudomonas putida (strain GB-1).